Here is a 274-residue protein sequence, read N- to C-terminus: Rhamnulose-1-phosphate aldolase (274 aa).

The active site involves Glu117. Residues His141, His143, and His212 each coordinate Zn(2+).

The protein belongs to the aldolase class II family. RhaD subfamily. As to quaternary structure, homotetramer. Zn(2+) serves as cofactor.

The protein localises to the cytoplasm. The enzyme catalyses L-rhamnulose 1-phosphate = (S)-lactaldehyde + dihydroxyacetone phosphate. It functions in the pathway carbohydrate degradation; L-rhamnose degradation; glycerone phosphate from L-rhamnose: step 3/3. Its function is as follows. Catalyzes the reversible cleavage of L-rhamnulose-1-phosphate to dihydroxyacetone phosphate (DHAP) and L-lactaldehyde. The protein is Rhamnulose-1-phosphate aldolase of Escherichia coli O127:H6 (strain E2348/69 / EPEC).